Reading from the N-terminus, the 711-residue chain is C-Jun-amino-terminal kinase-interacting protein 1 (711 aa).

The tract at residues 1 to 27 (MAERESGGLGGGAASPPAASPFLGLHI) is disordered. Residues 14 to 25 (ASPPAASPFLGL) are compositionally biased toward low complexity. Phosphoserine occurs at positions 15, 29, and 40. A disordered region spans residues 78–371 (AGGGGAGSRL…PPRASLSSDT (294 aa)). Thr103 is subject to Phosphothreonine; by MAPK8, MAPK9 and MAPK10. Positions 105 to 116 (GAEDDEEDDDEE) are enriched in acidic residues. Residues 127-285 (PKAESGQEPA…EATEEIYLTP (159 aa)) are JNK-binding domain (JBD). The segment covering 139–149 (GQGQSQGQSQG) has biased composition (low complexity). Ser152 bears the Phosphoserine mark. The minimal inhibitory domain (MID) stretch occupies residues 157–176 (RPKRPTTLNLFPQVPRSQDT). Over residues 162–182 (TTLNLFPQVPRSQDTLNNNSL) the composition is skewed to polar residues. Residues Ser181, Ser187, Ser193, Ser195, and Ser196 each carry the phosphoserine modification. Polar residues predominate over residues 194–204 (RSSSPLKTGEQ). Thr205 carries the post-translational modification Phosphothreonine; by MAPK8, MAPK9 and MAPK10. Ser214 is modified (phosphoserine). The span at 228 to 244 (DRGTSTDSPCRRSTATQ) shows a compositional bias: polar residues. The span at 267 to 277 (IHYQADVRLEA) shows a compositional bias: basic and acidic residues. Residues 283 to 471 (LTPVQRPPDA…NVFMSGRSRS (189 aa)) are interaction with MAP3K7. Residues Ser311, Ser328, Ser330, Ser340, Ser355, Ser366, Ser369, Ser407, and Ser409 each carry the phosphoserine modification. 2 consecutive short sequence motifs (D-box) follow at residues 353–360 (RGSLGEPP) and 364–372 (RASLSSDTS). Residue Thr411 is modified to Phosphothreonine. Residues 429–451 (EEYEEAPRPQPPACLSEDSTPDE) form a disordered region. Phosphoserine is present on residues Ser444 and Ser447. Phosphothreonine is present on Thr448. A phosphoserine mark is found at Ser469, Ser471, Ser472, and Ser473. The tract at residues 471–660 (SSSAESFGLF…PKNNKYFGFI (190 aa)) is interaction with VRK2. The region spanning 488–549 (EQEQTHRAIF…PAYYAIEVTK (62 aa)) is the SH3 domain. The 140-residue stretch at 561 to 700 (SDWVDQFRVK…FQQFYKQFVE (140 aa)) folds into the PID domain.

Belongs to the JIP scaffold family. In terms of assembly, forms homo- or heterooligomeric complexes. Binds specific components of the JNK signaling pathway namely, MAPK8/JNK1, MAPK9/JNK2, MAPK10/JNK3, MAP2K7/MKK7, MAP3K11/MLK3 and DLK1. Also binds the proline-rich domain-containing splice variant of apolipoprotein E receptor 2 (ApoER2). Interacts, via the PID domain, with ARHGEF28. Binds the cytoplasmic tails of LRP1 and LRP2 (Megalin). Binds the TPR motif-containing C-terminal of KNS2, then the pre-assembled MAPK8IP1 scaffolding complexes are transported as a cargo of kinesin, to the required subcellular location. Interacts with the cytoplasmic domain of APP. Interacts with DCLK2. Interacts with MAP3K7/TAK1. Interacts with isoform 1 and isoform 2 of VRK2. Found in a complex with SH3RF1, RAC1, MAP3K11/MLK3, MAP2K7/MKK7 and MAPK8/JNK1. Found in a complex with SH3RF1, RAC2, MAP3K7/TAK1, MAP2K7/MKK7, MAPK8/JNK1 and MAPK9/JNK2. Interacts with SH3RF2. Phosphorylated by MAPK8, MAPK9 and MAPK10. Phosphorylation on Thr-103 is also necessary for the dissociation and activation of MAP3K12. Phosphorylated by isoform 1 and isoform 2 of VRK2. Hyperphosphorylated during mitosis following activation of stress-activated and MAP kinases. Post-translationally, ubiquitinated. Two preliminary events are required to prime for ubiquitination; phosphorylation and an increased in intracellular calcium concentration. Then, the calcium influx initiates ubiquitination and degradation by the ubiquitin-proteasome pathway. Highly expressed in brain. Expressed in neurons, localizing to neurite tips in differentiating cells. Also expressed in the pancreas, testis and prostate. Low levels in heart, ovary and small intestine. Decreased levels in pancreatic beta cells sensitize cells to IL-1-beta-induced apoptosis.

It localises to the cytoplasm. Its subcellular location is the perinuclear region. The protein resides in the nucleus. It is found in the endoplasmic reticulum membrane. The protein localises to the mitochondrion membrane. The JNK-interacting protein (JIP) group of scaffold proteins selectively mediates JNK signaling by aggregating specific components of the MAPK cascade to form a functional JNK signaling module. Required for JNK activation in response to excitotoxic stress. Cytoplasmic MAPK8IP1 causes inhibition of JNK-regulated activity by retaining JNK in the cytoplasm and inhibiting JNK phosphorylation of c-Jun. May also participate in ApoER2-specific reelin signaling. Directly, or indirectly, regulates GLUT2 gene expression and beta-cell function. Appears to have a role in cell signaling in mature and developing nerve terminals. May function as a regulator of vesicle transport, through interactions with the JNK-signaling components and motor proteins. Functions as an anti-apoptotic protein and whose level seems to influence the beta-cell death or survival response. Acts as a scaffold protein that coordinates with SH3RF1 in organizing different components of the JNK pathway, including RAC1 or RAC2, MAP3K11/MLK3 or MAP3K7/TAK1, MAP2K7/MKK7, MAPK8/JNK1 and/or MAPK9/JNK2 into a functional multiprotein complex to ensure the effective activation of the JNK signaling pathway. Regulates the activation of MAPK8/JNK1 and differentiation of CD8(+) T-cells. The polypeptide is C-Jun-amino-terminal kinase-interacting protein 1 (MAPK8IP1) (Homo sapiens (Human)).